Reading from the N-terminus, the 49-residue chain is Delta-actitoxin-Axm1h (49 aa).

3 disulfides stabilise this stretch: cysteine 4–cysteine 46, cysteine 6–cysteine 36, and cysteine 29–cysteine 47.

This sequence belongs to the sea anemone sodium channel inhibitory toxin family. Type I subfamily.

The protein resides in the secreted. It is found in the nematocyst. In terms of biological role, binds specifically to voltage-gated sodium channels (Nav) (site 3), thereby delaying their inactivation during signal transduction. Thus it may strongly stimulate mammalian cardiac muscle contraction. This Anthopleura xanthogrammica (Giant green sea anemone) protein is Delta-actitoxin-Axm1h.